Consider the following 1790-residue polypeptide: Cytokinesis protein sepA (1790 aa).

Disordered regions lie at residues 1–275 and 328–350; these read MPTS…YLTR and GEQKRKQKARETHGYDGPSGILE. A compositionally biased stretch (basic and acidic residues) spans 24 to 35; sequence ERPVEDRWDAHG. Composition is skewed to low complexity over residues 39-62 and 187-203; these read SLAPPSSAAGSRSSRYSKRSSIQS and SHHSSSTVDSSTNSRMS. A compositionally biased stretch (polar residues) spans 205 to 236; it reads DQASIHSSLSSNTRGSSYISTDGSSRTTLPSH. Residues 274–702 form the GBD/FH3 domain; the sequence is TRPRDDRVVD…YVAMDRRLPD (429 aa). The segment covering 328–341 has biased composition (basic and acidic residues); that stretch reads GEQKRKQKARETHG. The stretch at 724 to 811 forms a coiled coil; the sequence is AEARRAYDES…QRNELETREL (88 aa). The 182-residue stretch at 955–1136 folds into the FH1 domain; that stretch reads DPEQATGLLG…NYLASQGAPS (182 aa). The span at 975-986 shows a compositional bias: basic and acidic residues; that stretch reads ADDAKDEGKPTE. 3 disordered regions span residues 975–1119, 1465–1484, and 1596–1790; these read ADDA…PPGT, NLSDPKKFHPQDRVSQITQR, and RAAA…PSTS. Pro residues-rich tracts occupy residues 1015-1026 and 1033-1118; these read APPPPPPPPPAH and APPP…PPPG. The FH2 domain maps to 1141 to 1564; that stretch reads VMSSIRPKKK…TEASLARKRI (424 aa). Residues 1435–1566 are a coiled coil; the sequence is LQKLNVDQLR…ASLARKRINV (132 aa). In terms of domain architecture, DAD spans 1581–1613; that stretch reads SPATSGAMDSLLEKLRAAAPQAKDQRDRRRRAR. Basic residues predominate over residues 1608-1620; that stretch reads RRRRARLKERHQV. Positions 1644 to 1661 are enriched in polar residues; that stretch reads SGATDTNATDSSLLSPTI. Over residues 1694 to 1710 the composition is skewed to basic and acidic residues; sequence PDPERTRRRRESAEEER. The span at 1720–1746 shows a compositional bias: polar residues; it reads GATSGSKDSNDTTPLSPVTEPTSTQGE.

Belongs to the formin homology family. BNI1 subfamily.

Functionally, involved in cytokinesis. Overexpression results in growth inhibition. This is Cytokinesis protein sepA (sepA) from Emericella nidulans (strain FGSC A4 / ATCC 38163 / CBS 112.46 / NRRL 194 / M139) (Aspergillus nidulans).